The primary structure comprises 462 residues: Chromosomal replication initiator protein DnaA (462 aa).

Residues 1-84 (MAVSLWQQCI…RFDIGSRPSA (84 aa)) are domain I, interacts with DnaA modulators. Residues 84-125 (APKPIQATAAVVKPKLESSPQKSQTSFNVNAPEPAATANHRS) form a domain II region. The tract at residues 126 to 342 (NINPTYQFEN…GALNRVIANA (217 aa)) is domain III, AAA+ region. ATP-binding residues include glycine 170, glycine 172, lysine 173, and threonine 174. The tract at residues 343-462 (NFTGRPITID…YANLIRTLSS (120 aa)) is domain IV, binds dsDNA.

The protein belongs to the DnaA family. In terms of assembly, oligomerizes as a right-handed, spiral filament on DNA at oriC.

It localises to the cytoplasm. Functionally, plays an essential role in the initiation and regulation of chromosomal replication. ATP-DnaA binds to the origin of replication (oriC) to initiate formation of the DNA replication initiation complex once per cell cycle. Binds the DnaA box (a 9 base pair repeat at the origin) and separates the double-stranded (ds)DNA. Forms a right-handed helical filament on oriC DNA; dsDNA binds to the exterior of the filament while single-stranded (ss)DNA is stabiized in the filament's interior. The ATP-DnaA-oriC complex binds and stabilizes one strand of the AT-rich DNA unwinding element (DUE), permitting loading of DNA polymerase. After initiation quickly degrades to an ADP-DnaA complex that is not apt for DNA replication. Binds acidic phospholipids. This is Chromosomal replication initiator protein DnaA from Shewanella woodyi (strain ATCC 51908 / MS32).